The primary structure comprises 198 residues: MAEKQTAKRNRREEILQSLALMLESSDGSQRITTAKLAASVGVSEAALYRHFPSKTRMFDSLIEFIEDSLITRINLILKDEKDTSTRLRLIVLLILGFGERNPGLTRILTGHALMFEQDRLQGRINQLFERIEAQLRQVLREKRMREGEGYTTDKNLLASQLLAFCEGMLSRFVRSEFKYRPTDDFDARWPLIAAQLQ.

An HTH tetR-type domain is found at 10–70 (NRREEILQSL…SLIEFIEDSL (61 aa)). Residues 33–52 (TTAKLAASVGVSEAALYRHF) constitute a DNA-binding region (H-T-H motif). Residues 117–144 (EQDRLQGRINQLFERIEAQLRQVLREKR) adopt a coiled-coil conformation.

The protein belongs to the nucleoid occlusion factor SlmA family. As to quaternary structure, homodimer. Interacts with FtsZ.

It is found in the cytoplasm. It localises to the nucleoid. Its function is as follows. Required for nucleoid occlusion (NO) phenomenon, which prevents Z-ring formation and cell division over the nucleoid. Acts as a DNA-associated cell division inhibitor that binds simultaneously chromosomal DNA and FtsZ, and disrupts the assembly of FtsZ polymers. SlmA-DNA-binding sequences (SBS) are dispersed on non-Ter regions of the chromosome, preventing FtsZ polymerization at these regions. The chain is Nucleoid occlusion factor SlmA from Salmonella typhi.